Consider the following 151-residue polypeptide: MKLLKVAAIAAIVFSGSALAGVVPQYGGGGNHGGGGNNSGPNSELNIYQYGGGNSALALQTDARNSDLTITQHGGGNGADVGQGSDDSSIDLTQRGFGNSATLDQWNGKNSEMTVKQFGGGNGAAVDQTASNSSVNVTQVGFGNNATAHQY.

The N-terminal stretch at 1–20 is a signal peptide; that stretch reads MKLLKVAAIAAIVFSGSALA. The interval 71–90 is disordered; it reads TQHGGGNGADVGQGSDDSSI.

It belongs to the CsgA/CsgB family.

It localises to the fimbrium. In terms of biological role, curlin is the structural subunit of the curli fimbriae. Curli are coiled surface structures that assemble preferentially at growth temperatures below 37 degrees Celsius. Curli can bind to fibronectin. The chain is Major curlin subunit (csgA) from Escherichia coli (strain K12).